Consider the following 368-residue polypeptide: Probable auxin efflux carrier component 5b (368 aa).

10 helical membrane passes run 7–27 (VYKV…GYGS), 39–59 (CDAV…FDFA), 71–91 (VLAA…ACAA), 114–134 (CITG…VPLL), 145–165 (LIVQ…LLAF), 227–247 (VLGV…PSII), 251–271 (VLIM…LFMA), 286–306 (LGMA…AFAL), 312–332 (LLRL…FVFA), and 347–367 (IFGT…LGFI).

The protein belongs to the auxin efflux carrier (TC 2.A.69.1) family. As to expression, expressed at low levels in roots and shoot apex.

The protein resides in the membrane. In terms of biological role, may act as a component of the auxin efflux carrier. The chain is Probable auxin efflux carrier component 5b from Oryza sativa subsp. japonica (Rice).